Consider the following 133-residue polypeptide: Holo-[acyl-carrier-protein] synthase (133 aa).

Mg(2+)-binding residues include Asp-8 and Glu-57.

The protein belongs to the P-Pant transferase superfamily. AcpS family. Mg(2+) serves as cofactor.

The protein resides in the cytoplasm. The catalysed reaction is apo-[ACP] + CoA = holo-[ACP] + adenosine 3',5'-bisphosphate + H(+). Transfers the 4'-phosphopantetheine moiety from coenzyme A to a Ser of acyl-carrier-protein. The polypeptide is Holo-[acyl-carrier-protein] synthase (Parvibaculum lavamentivorans (strain DS-1 / DSM 13023 / NCIMB 13966)).